An 86-amino-acid chain; its full sequence is Probable protein BRICK1 (86 aa).

Positions 47 to 81 (EATTKSKLASLNEKLDILERKLEVLEVQVSSATTN) form a coiled coil.

It belongs to the BRK1 family. As to quaternary structure, binds SCAR.

The protein resides in the cytoplasm. It localises to the cytoskeleton. Involved in regulation of actin and microtubule organization. Part of a WAVE complex that activates the Arp2/3 complex. This chain is Probable protein BRICK1, found in Oryza sativa subsp. japonica (Rice).